The chain runs to 155 residues: Ribosomal RNA large subunit methyltransferase H (155 aa).

S-adenosyl-L-methionine is bound by residues Gly-104 and 123–128 (LSRLTL).

It belongs to the RNA methyltransferase RlmH family. In terms of assembly, homodimer.

Its subcellular location is the cytoplasm. The catalysed reaction is pseudouridine(1915) in 23S rRNA + S-adenosyl-L-methionine = N(3)-methylpseudouridine(1915) in 23S rRNA + S-adenosyl-L-homocysteine + H(+). Functionally, specifically methylates the pseudouridine at position 1915 (m3Psi1915) in 23S rRNA. The sequence is that of Ribosomal RNA large subunit methyltransferase H from Marinomonas sp. (strain MWYL1).